The primary structure comprises 159 residues: Cyclic pyranopterin monophosphate synthase (159 aa).

Substrate-binding positions include 75–77 (LCH) and 113–114 (ME). Asp-128 is an active-site residue.

It belongs to the MoaC family. In terms of assembly, homohexamer; trimer of dimers.

The catalysed reaction is (8S)-3',8-cyclo-7,8-dihydroguanosine 5'-triphosphate = cyclic pyranopterin phosphate + diphosphate. Its pathway is cofactor biosynthesis; molybdopterin biosynthesis. Its function is as follows. Catalyzes the conversion of (8S)-3',8-cyclo-7,8-dihydroguanosine 5'-triphosphate to cyclic pyranopterin monophosphate (cPMP). This chain is Cyclic pyranopterin monophosphate synthase, found in Serratia proteamaculans (strain 568).